The following is a 103-amino-acid chain: Large ribosomal subunit protein bL21 (103 aa).

This sequence belongs to the bacterial ribosomal protein bL21 family. In terms of assembly, part of the 50S ribosomal subunit. Contacts protein L20.

In terms of biological role, this protein binds to 23S rRNA in the presence of protein L20. The chain is Large ribosomal subunit protein bL21 from Herminiimonas arsenicoxydans.